Here is a 33-residue protein sequence, read N- to C-terminus: Cytochrome b6-f complex subunit 8 (33 aa).

A helical transmembrane segment spans residues 2 to 22; sequence LISLGWAALAATFTFSIAMVV.

It belongs to the PetN family. As to quaternary structure, the 4 large subunits of the cytochrome b6-f complex are cytochrome b6, subunit IV (17 kDa polypeptide, PetD), cytochrome f and the Rieske protein, while the 4 small subunits are PetG, PetL, PetM and PetN. The complex functions as a dimer.

The protein localises to the cellular thylakoid membrane. Its function is as follows. Component of the cytochrome b6-f complex, which mediates electron transfer between photosystem II (PSII) and photosystem I (PSI), cyclic electron flow around PSI, and state transitions. This is Cytochrome b6-f complex subunit 8 from Synechococcus sp. (strain RCC307).